We begin with the raw amino-acid sequence, 165 residues long: Large ribosomal subunit protein uL10 (165 aa).

Belongs to the universal ribosomal protein uL10 family. Part of the ribosomal stalk of the 50S ribosomal subunit. The N-terminus interacts with L11 and the large rRNA to form the base of the stalk. The C-terminus forms an elongated spine to which L12 dimers bind in a sequential fashion forming a multimeric L10(L12)X complex.

Its function is as follows. Forms part of the ribosomal stalk, playing a central role in the interaction of the ribosome with GTP-bound translation factors. The sequence is that of Large ribosomal subunit protein uL10 from Mycoplasmopsis synoviae (strain 53) (Mycoplasma synoviae).